We begin with the raw amino-acid sequence, 94 residues long: MLKPLGDRVVLKIEEKEQTVGGFVLAGSAQEKTKTAQVVATGQGVRTLNGDLVAPSVKTGDRVLVEAHAGLDVKDGDEKYIIVGEVNILAIIEE.

It belongs to the GroES chaperonin family. In terms of assembly, heptamer of 7 subunits arranged in a ring. Interacts with the chaperonin GroEL.

It is found in the cytoplasm. Together with the chaperonin GroEL, plays an essential role in assisting protein folding. The GroEL-GroES system forms a nano-cage that allows encapsulation of the non-native substrate proteins and provides a physical environment optimized to promote and accelerate protein folding. GroES binds to the apical surface of the GroEL ring, thereby capping the opening of the GroEL channel. This is Co-chaperonin GroES from Streptococcus pneumoniae (strain 70585).